The sequence spans 429 residues: Enolase (429 aa).

Glutamine 163 contributes to the (2R)-2-phosphoglycerate binding site. Catalysis depends on glutamate 205, which acts as the Proton donor. Residues aspartate 242, glutamate 287, and aspartate 314 each contribute to the Mg(2+) site. 4 residues coordinate (2R)-2-phosphoglycerate: lysine 339, arginine 368, serine 369, and lysine 390. Lysine 339 (proton acceptor) is an active-site residue.

This sequence belongs to the enolase family. Requires Mg(2+) as cofactor.

The protein resides in the cytoplasm. The protein localises to the secreted. It is found in the cell surface. It carries out the reaction (2R)-2-phosphoglycerate = phosphoenolpyruvate + H2O. It participates in carbohydrate degradation; glycolysis; pyruvate from D-glyceraldehyde 3-phosphate: step 4/5. In terms of biological role, catalyzes the reversible conversion of 2-phosphoglycerate (2-PG) into phosphoenolpyruvate (PEP). It is essential for the degradation of carbohydrates via glycolysis. This chain is Enolase, found in Anaeromyxobacter dehalogenans (strain 2CP-1 / ATCC BAA-258).